Consider the following 483-residue polypeptide: Betaine aldehyde dehydrogenase (483 aa).

Ile-27 and Asp-93 together coordinate K(+). NAD(+) is bound at residue 149–151 (GAW). Lys-161 serves as the catalytic Charge relay system. 175 to 178 (KPSE) serves as a coordination point for NAD(+). Val-179 provides a ligand contact to K(+). 228–231 (SVPT) is a binding site for NAD(+). K(+) is bound at residue Val-243. Residue Glu-249 is the Proton acceptor of the active site. NAD(+) is bound by residues Gly-251, Cys-283, and Glu-380. Cys-283 serves as the catalytic Nucleophile. A Cysteine sulfenic acid (-SOH) modification is found at Cys-283. Residues Lys-450 and Gly-453 each contribute to the K(+) site. The active-site Charge relay system is the Glu-457.

This sequence belongs to the aldehyde dehydrogenase family. Dimer of dimers. Requires K(+) as cofactor.

The catalysed reaction is betaine aldehyde + NAD(+) + H2O = glycine betaine + NADH + 2 H(+). It participates in amine and polyamine biosynthesis; betaine biosynthesis via choline pathway; betaine from betaine aldehyde: step 1/1. Functionally, involved in the biosynthesis of the osmoprotectant glycine betaine. Catalyzes the irreversible oxidation of betaine aldehyde to the corresponding acid. In Cereibacter sphaeroides (strain KD131 / KCTC 12085) (Rhodobacter sphaeroides), this protein is Betaine aldehyde dehydrogenase.